We begin with the raw amino-acid sequence, 396 residues long: Activity-regulated cytoskeleton-associated protein (396 aa).

Residues 54–78 (SKQVERELKGLHRSVGKLENNLDGY) are a coiled coil. The interaction with SH3GL1 or SH3GL3 stretch occupies residues 89-100 (KSIKACLCRCQE). Residues 195–214 (QSWVPGEDGQPSPGVDTQIF) form an interaction with DNM2 region. S260 is modified (phosphoserine). Glycyl lysine isopeptide (Lys-Gly) (interchain with G-Cter in ubiquitin) cross-links involve residues K268 and K269. T278 is modified (phosphothreonine). The tract at residues 358–396 (GLEQAAEPSVTPLPTEDETEALTPALTSESVASDRTQPE) is disordered. Positions 382–396 (ALTSESVASDRTQPE) are enriched in polar residues.

The protein belongs to the ARC/ARG3.1 family. Homooligomer; homooligomerizes into virion-like capsids. Interacts with SH3GL1/endophilin-2, SH3GL3/endophilin-3 and DNM2/DYN2. Interacts with CAMK2B (in the kinase inactive state); leading to target ARC to inactive synapses. Interacts with PSEN1. Interacts with GRIN2A and GRIN2B; inhibiting homooligomerization. Post-translationally, palmitoylation anchors the protein into the membrane by allowing direct insertion into the hydrophobic core of the lipid bilayer. In terms of processing, ubiquitinated by UBE3A, leading to its degradation by the proteasome, thereby promoting AMPA receptors (AMPARs) expression at synapses. Ubiquitinated by RNF216 at Lys-268 and Lys-269 limiting ARC protein levels induced by synaptic activity and thus regulating ARC-dependent forms of synaptic plasticity. Phosphorylation at Ser-260 by CaMK2 prevents homooligomerization into virion-like capsids by disrupting an interaction surface essential for high-order oligomerization. Phosphorylation by CaMK2 inhibits synaptic activity. As to expression, expressed exclusively in certain parts of the brain including cortex and molecular layer of the hippocampus. Typically expressed at high level in a minority of neurons. Basal expression higher in cortex than in hippocampus, highest in visual cortex.

It localises to the extracellular vesicle membrane. Its subcellular location is the postsynaptic cell membrane. It is found in the synapse. The protein resides in the postsynaptic density. The protein localises to the early endosome membrane. It localises to the cell projection. Its subcellular location is the dendrite. It is found in the cytoplasm. The protein resides in the cytoskeleton. The protein localises to the cell cortex. It localises to the dendritic spine. Its subcellular location is the cytoplasmic vesicle. It is found in the secretory vesicle. The protein resides in the acrosome. The protein localises to the clathrin-coated vesicle membrane. Master regulator of synaptic plasticity that self-assembles into virion-like capsids that encapsulate RNAs and mediate intercellular RNA transfer in the nervous system. ARC protein is released from neurons in extracellular vesicles that mediate the transfer of ARC mRNA into new target cells, where ARC mRNA can undergo activity-dependent translation. ARC capsids are endocytosed and are able to transfer ARC mRNA into the cytoplasm of neurons. Acts as a key regulator of synaptic plasticity: required for protein synthesis-dependent forms of long-term potentiation (LTP) and depression (LTD) and for the formation of long-term memory. Regulates synaptic plasticity by promoting endocytosis of AMPA receptors (AMPARs) in response to synaptic activity: this endocytic pathway maintains levels of surface AMPARs in response to chronic changes in neuronal activity through synaptic scaling, thereby contributing to neuronal homeostasis. Acts as a postsynaptic mediator of activity-dependent synapse elimination in the developing cerebellum by mediating elimination of surplus climbing fiber synapses. Accumulates at weaker synapses, probably to prevent their undesired enhancement. This suggests that ARC-containing virion-like capsids may be required to eliminate synaptic material. Required to transduce experience into long-lasting changes in visual cortex plasticity and for long-term memory. Involved in postsynaptic trafficking and processing of amyloid-beta A4 (APP) via interaction with PSEN1. In addition to its role in synapses, also involved in the regulation of the immune system: specifically expressed in skin-migratory dendritic cells and regulates fast dendritic cell migration, thereby regulating T-cell activation. In Rattus norvegicus (Rat), this protein is Activity-regulated cytoskeleton-associated protein.